The following is a 219-amino-acid chain: ATP-dependent Clp protease proteolytic subunit 3 (219 aa).

Catalysis depends on serine 112, which acts as the Nucleophile. The active site involves histidine 137.

It belongs to the peptidase S14 family. As to quaternary structure, fourteen ClpP subunits assemble into 2 heptameric rings which stack back to back to give a disk-like structure with a central cavity, resembling the structure of eukaryotic proteasomes.

Its subcellular location is the cytoplasm. The enzyme catalyses Hydrolysis of proteins to small peptides in the presence of ATP and magnesium. alpha-casein is the usual test substrate. In the absence of ATP, only oligopeptides shorter than five residues are hydrolyzed (such as succinyl-Leu-Tyr-|-NHMec, and Leu-Tyr-Leu-|-Tyr-Trp, in which cleavage of the -Tyr-|-Leu- and -Tyr-|-Trp bonds also occurs).. Its function is as follows. Cleaves peptides in various proteins in a process that requires ATP hydrolysis. Has a chymotrypsin-like activity. Plays a major role in the degradation of misfolded proteins. In Streptomyces avermitilis (strain ATCC 31267 / DSM 46492 / JCM 5070 / NBRC 14893 / NCIMB 12804 / NRRL 8165 / MA-4680), this protein is ATP-dependent Clp protease proteolytic subunit 3.